A 469-amino-acid chain; its full sequence is Adenosylhomocysteinase (469 aa).

Substrate is bound by residues threonine 63, aspartate 139, and glutamate 164. 165–167 (TTT) is an NAD(+) binding site. Residues lysine 194 and aspartate 198 each coordinate substrate. NAD(+)-binding positions include asparagine 199, 228 to 233 (GYGDVG), glutamate 251, asparagine 300, 321 to 323 (IGH), and asparagine 375.

The protein belongs to the adenosylhomocysteinase family. It depends on NAD(+) as a cofactor.

It localises to the cytoplasm. It catalyses the reaction S-adenosyl-L-homocysteine + H2O = L-homocysteine + adenosine. It participates in amino-acid biosynthesis; L-homocysteine biosynthesis; L-homocysteine from S-adenosyl-L-homocysteine: step 1/1. Its function is as follows. May play a key role in the regulation of the intracellular concentration of adenosylhomocysteine. The sequence is that of Adenosylhomocysteinase from Ectopseudomonas mendocina (strain ymp) (Pseudomonas mendocina).